Consider the following 1097-residue polypeptide: DNA-directed RNA polymerase subunit beta (1097 aa).

The interval 1072 to 1097 (QDVNPRRSTPSRPTYESLGVADYDED) is disordered.

The protein belongs to the RNA polymerase beta chain family. In terms of assembly, in cyanobacteria the RNAP catalytic core is composed of 2 alpha, 1 beta, 1 beta', 1 gamma and 1 omega subunit. When a sigma factor is associated with the core the holoenzyme is formed, which can initiate transcription.

The catalysed reaction is RNA(n) + a ribonucleoside 5'-triphosphate = RNA(n+1) + diphosphate. In terms of biological role, DNA-dependent RNA polymerase catalyzes the transcription of DNA into RNA using the four ribonucleoside triphosphates as substrates. The protein is DNA-directed RNA polymerase subunit beta of Synechococcus sp. (strain CC9902).